A 1441-amino-acid chain; its full sequence is Histone-lysine N-methyltransferase SETD5 (1441 aa).

The disordered stretch occupies residues 1 to 28; it reads MSIAIPLGVTTPDTSYSDMAAGSDPESV. At Leu70 the chain carries Phosphothreonine. A phosphoserine mark is found at Ser72 and Val74. The interval 156–202 is disordered; that stretch reads TPTSITLTVRRTKPKKRKKSPEKGRAAPKTKKIKNSPSEAQNLDENT. Residues 165 to 189 are compositionally biased toward basic residues; sequence RRTKPKKRKKSPEKGRAAPKTKKIK. Over residues 190-202 the composition is skewed to polar residues; it reads NSPSEAQNLDENT. An SET domain is found at 269 to 390; it reads MQLQLGRVTR…KDAEVTIAFD (122 aa). Disordered stretches follow at residues 417 to 683 and 793 to 816; these read NPNA…TVIS and MTQT…ETSN. 2 stretches are compositionally biased toward acidic residues: residues 450–461 and 479–501; these read LEQQNEVPEENP and EEVD…DDQE. Low complexity-rich tracts occupy residues 539–552 and 561–572; these read SSSD…SSEI and AAPESEVSSPVS. The segment covering 575 to 588 has biased composition (polar residues); the sequence is AIPSTPQSTGVNTR. The span at 611-621 shows a compositional bias: basic residues; it reads SRPRPKSRISR. Over residues 635-650 the composition is skewed to low complexity; it reads QAIAQQAELSQAALEE. Residues 652-683 are compositionally biased toward polar residues; that stretch reads GSNNSVTPPEAGNTDSSGENRQLTGSDPTVIS. Phosphoserine occurs at positions 829 and 852. Disordered regions lie at residues 849-883, 1036-1228, and 1243-1441; these read QPLS…ECRN, DLSR…SKGA, and CDSP…TGLS. Thr855 carries the phosphothreonine modification. Over residues 1062–1076 the composition is skewed to basic residues; that stretch reads QRKKVSLLEYRKRKQ. The span at 1087-1107 shows a compositional bias: low complexity; the sequence is DSSQSKSKSSGAGQGSSNSVS. The segment covering 1144–1163 has biased composition (polar residues); that stretch reads PSDSRGTSSSHCRPQENISS. Ser1197 carries the post-translational modification Phosphoserine. Low complexity predominate over residues 1250-1259; sequence SQSLLQQSSS. The segment covering 1265–1275 has biased composition (polar residues); sequence PTQSPGYSYRT. Over residues 1284 to 1300 the composition is skewed to low complexity; it reads PSHGSSESSLSSTSYPS. Residues 1319 to 1333 show a composition bias toward polar residues; it reads YYSSQPHSGNSTGSN. Positions 1335-1372 are enriched in low complexity; that stretch reads PRRSCSSSAASPTPQGPSDSPTSDSVSQSSTGTLSSTS. Composition is skewed to polar residues over residues 1373–1382, 1389–1412, and 1429–1441; these read FPQNSRSSLP, SLPN…NSQH, and LQGS…TGLS.

In terms of assembly, interacts with components of the PAF1 complex (PAF1C) such as LEO1, CTR9 and CDC73. Interacts with NCOR1. Interacts with HDAC3. In terms of tissue distribution, ubiquitously expressed.

It localises to the nucleus. The protein resides in the chromosome. It carries out the reaction L-lysyl(9)-[histone H3] + S-adenosyl-L-methionine = N(6)-methyl-L-lysyl(9)-[histone H3] + S-adenosyl-L-homocysteine + H(+). The enzyme catalyses L-lysyl(36)-[histone H3] + 3 S-adenosyl-L-methionine = N(6),N(6),N(6)-trimethyl-L-lysyl(36)-[histone H3] + 3 S-adenosyl-L-homocysteine + 3 H(+). Its function is as follows. Chromatin regulator required for brain development: acts as a regulator of RNA elongation rate, thereby regulating neural stem cell (NSC) proliferation and synaptic transmission. May act by mediating trimethylation of 'Lys-36' of histone H3 (H3K36me3), which is essential to allow on-time RNA elongation dynamics. Also monomethylates 'Lys-9' of histone H3 (H3K9me1) in vitro. The relevance of histone methyltransferase activity is however subject to discussion. This chain is Histone-lysine N-methyltransferase SETD5, found in Mus musculus (Mouse).